An 852-amino-acid polypeptide reads, in one-letter code: Kinesin-like protein KIF18B (852 aa).

Positions 7–351 constitute a Kinesin motor domain; it reads TLQVVVRVRP…LKYADRAKEI (345 aa). An ATP-binding site is contributed by 109-116; sequence GATGAGKT. Residues 366-393 are a coiled coil; the sequence is ISQYATICQQLQAEVAALRKKLQVYEGG. Disordered regions lie at residues 390 to 424 and 437 to 485; these read YEGG…PAGP and QVER…RLTL. The residue at position 404 (Ser-404) is a Phosphoserine. At Thr-417 the chain carries Phosphothreonine. Acidic residues predominate over residues 451–461; that stretch reads QSPEDEDEGPA. 3 positions are modified to phosphoserine: Ser-452, Ser-480, and Ser-558. 2 disordered regions span residues 575-594 and 602-689; these read IPVP…PVTR and GPLH…SPRV. Over residues 577-588 the composition is skewed to pro residues; that stretch reads VPSPLCPEPPGY. Residues 624–632 carry the Nuclear localization signal motif; it reads PMEKKRRRP. 2 positions are modified to phosphoserine: Ser-633 and Ser-639. The MAPRE1-binding signature appears at 653–656; that stretch reads SFLP. Ser-662 carries the phosphoserine modification. The span at 664-673 shows a compositional bias: polar residues; the sequence is PDTQPSQGPS. A Phosphothreonine modification is found at Thr-674. The KIF2C-binding stretch occupies residues 711 to 736; sequence TPLALPTRDLNATFDLSEEPPSKPSF. Positions 767 to 798 are disordered; sequence MKGPKPTSSLPGTSACKKKRVASSSVSHGRSR. 2 short sequence motifs (MAPRE1-binding) span residues 774 to 777 and 800 to 803; these read SSLP and ARLP. Phosphoserine is present on Ser-822.

It belongs to the TRAFAC class myosin-kinesin ATPase superfamily. Kinesin family. As to quaternary structure, interacts with MAPRE1; this interaction is required for efficient accumulation at microtubule plus ends. Interacts with KIF2C at microtubule tips; this interaction increases the affinity of both partners for microtubule plus ends and is required for robust microtubule depolymerization. KIF2C phosphorylation by AURKA or AURKB strongly reduces KIF18B-binding. Shows a prominent expression in the amygdala.

It is found in the nucleus. The protein localises to the cytoplasm. Its subcellular location is the cytoskeleton. Its function is as follows. In complex with KIF2C, constitutes the major microtubule plus-end depolymerizing activity in mitotic cells. Its major role may be to transport KIF2C and/or MAPRE1 along microtubules. In Homo sapiens (Human), this protein is Kinesin-like protein KIF18B (KIF18B).